The sequence spans 296 residues: DNA-3-methyladenine glycosylase (296 aa).

Ser110 carries the phosphoserine modification. Asp209 acts as the Proton acceptor in catalysis.

It belongs to the alkylbase DNA glycosidase AlkA family.

The protein localises to the nucleus. It catalyses the reaction Hydrolysis of alkylated DNA, releasing 3-methyladenine, 3-methylguanine, 7-methylguanine and 7-methyladenine.. Its function is as follows. Hydrolysis of the deoxyribose N-glycosidic bond to excise 3-methyladenine or 7-methyladenine from the damaged DNA polymer formed by alkylation lesions. The sequence is that of DNA-3-methyladenine glycosylase (MAG1) from Saccharomyces cerevisiae (strain ATCC 204508 / S288c) (Baker's yeast).